Consider the following 109-residue polypeptide: Nucleoid-associated protein VS_0917 (109 aa).

Disordered regions lie at residues 1-22 (MFGK…ERMQ) and 88-109 (QKEK…KMPF). Residues 9-18 (NMMKQAQQMQ) are compositionally biased toward low complexity.

The protein belongs to the YbaB/EbfC family. Homodimer.

The protein resides in the cytoplasm. Its subcellular location is the nucleoid. Its function is as follows. Binds to DNA and alters its conformation. May be involved in regulation of gene expression, nucleoid organization and DNA protection. The polypeptide is Nucleoid-associated protein VS_0917 (Vibrio atlanticus (strain LGP32) (Vibrio splendidus (strain Mel32))).